We begin with the raw amino-acid sequence, 210 residues long: ATP-dependent Clp protease proteolytic subunit (210 aa).

Catalysis depends on Ser107, which acts as the Nucleophile. His132 is an active-site residue.

The protein belongs to the peptidase S14 family. In terms of assembly, fourteen ClpP subunits assemble into 2 heptameric rings which stack back to back to give a disk-like structure with a central cavity, resembling the structure of eukaryotic proteasomes.

The protein localises to the cytoplasm. It catalyses the reaction Hydrolysis of proteins to small peptides in the presence of ATP and magnesium. alpha-casein is the usual test substrate. In the absence of ATP, only oligopeptides shorter than five residues are hydrolyzed (such as succinyl-Leu-Tyr-|-NHMec, and Leu-Tyr-Leu-|-Tyr-Trp, in which cleavage of the -Tyr-|-Leu- and -Tyr-|-Trp bonds also occurs).. Cleaves peptides in various proteins in a process that requires ATP hydrolysis. Has a chymotrypsin-like activity. Plays a major role in the degradation of misfolded proteins. This Zymomonas mobilis subsp. mobilis (strain ATCC 31821 / ZM4 / CP4) protein is ATP-dependent Clp protease proteolytic subunit.